The sequence spans 385 residues: Glucose-fructose oxidoreductase domain-containing protein 2 (385 aa).

A signal peptide spans 1–25 (MKMLPGVGVFGTGSSARVLVPLLRA).

It belongs to the Gfo/Idh/MocA family.

It localises to the secreted. It is found in the extracellular space. The protein resides in the extracellular matrix. Promotes matrix assembly. This is Glucose-fructose oxidoreductase domain-containing protein 2 (GFOD2) from Bos taurus (Bovine).